We begin with the raw amino-acid sequence, 54 residues long: Photoreceptor disk component PRCD (54 aa).

The S-palmitoyl cysteine moiety is linked to residue Cys-2. The disordered stretch occupies residues 24–54 (QPEPNGVDGAVSGSSLETDLQSSGREKEPLK). The segment covering 35 to 46 (SGSSLETDLQSS) has biased composition (polar residues).

It belongs to the PRCD family. As to quaternary structure, interacts with RHO/rhodopsin; the interaction promotes PRCD stability. In terms of processing, palmitoylated at Cys-2. Palmitoylation is essential for protein stability and trafficking to the photoreceptor outer segment, but does not appear to be essential for membrane localization. Probably palmitoylated by ZDHHC3. Post-translationally, phosphorylated. As to expression, expressed in retina (at protein level).

Its subcellular location is the cell projection. The protein resides in the cilium. It is found in the photoreceptor outer segment. It localises to the membrane. The protein localises to the endoplasmic reticulum. Its subcellular location is the golgi apparatus. Involved in vision. The sequence is that of Photoreceptor disk component PRCD from Bos taurus (Bovine).